A 324-amino-acid polypeptide reads, in one-letter code: Virulence-associated V antigen (324 aa).

Its subcellular location is the secreted. In terms of biological role, possibly involved in calcium regulation of YOP expression, which includes the export process. This Yersinia pestis (strain Pestoides F) protein is Virulence-associated V antigen (lcrV).